A 492-amino-acid chain; its full sequence is La-related protein 6 (492 aa).

The segment at M1–P87 is disordered. A2 bears the N-acetylalanine mark. Positions E24 to G37 are enriched in acidic residues. A phosphoserine mark is found at S56 and S58. A compositionally biased stretch (polar residues) spans G65–G74. An HTH La-type RNA-binding domain is found at R86–P177. The region spanning K184–P296 is the RRM domain. The Nuclear export signal signature appears at L186–L193. Disordered regions lie at residues G292–L398 and V466–V492. A Nuclear localization signal motif is present at residues P296–K302. Positions D332–P346 are enriched in low complexity. Residues N359 to L386 show a composition bias toward polar residues. The 59-residue stretch at P427–H485 folds into the SUZ-C domain. The span at G483–V492 shows a compositional bias: basic and acidic residues.

As to quaternary structure, interacts (via the HTH domain) with VIM/vimentin. Interacts (via C-terminus) with non-muscle myosin MYH10. Interacts (via C-terminus) with DHX9. In terms of tissue distribution, expressed in numerous tissues. Highest expression in heart and brain, intermediate in kidney, skeletal muscle and testis, lowest expression in testis (at protein level).

The protein resides in the cytoplasm. Its subcellular location is the nucleus. Its function is as follows. Regulates the coordinated translation of type I collagen alpha-1 and alpha-2 mRNAs, CO1A1 and CO1A2. Stabilizes mRNAs through high-affinity binding of a stem-loop structure in their 5' UTR. This regulation requires VIM and MYH10 filaments, and the helicase DHX9. The sequence is that of La-related protein 6 (Larp6) from Mus musculus (Mouse).